We begin with the raw amino-acid sequence, 195 residues long: MIRGGGSPSPYPSVPNPSAGLKRQCAVGAPRKSVMSQTGRDDPQSLDSQLCFAVYAAAHAFGRAYRSLLAHHELTYPQYLVLLVLWEEEGLSVKEIGSRLFLDSGTLTPLLKRLEASGHVRRARDRPDERQVSIFLTDKGRGLKGKMDCLPHTVGGMTGMTLDERRALLDNLASMRDELHARAGSTELPAANASR.

In terms of domain architecture, HTH marR-type spans 47-177 (DSQLCFAVYA…LLDNLASMRD (131 aa)). Residues 93-116 (VKEIGSRLFLDSGTLTPLLKRLEA) constitute a DNA-binding region (H-T-H motif).

It is found in the cytoplasm. Its function is as follows. Formaldehyde-responsive transcription factor that modulates resistance to stress induced by formaldehyde. Impacts the expression of a number of genes encoding transcription factors and/or involved in stress response, including efgA, and which probably collectively trigger a formaldehyde-specific physiological response. Required for optimal transition to methylotrophy. Not involved in a general stress response. The sequence is that of HTH-type transcriptional regulator TtmR from Methylorubrum extorquens (strain PA1) (Methylobacterium extorquens).